The sequence spans 240 residues: UDP-2,3-diacylglucosamine hydrolase (240 aa).

The Mn(2+) site is built by D8, H10, D41, N79, and H114. 79-80 (NR) is a substrate binding site. 5 residues coordinate substrate: D122, S160, N164, K167, and H195. The Mn(2+) site is built by H195 and H197.

The protein belongs to the LpxH family. The cofactor is Mn(2+).

The protein resides in the cell inner membrane. The enzyme catalyses UDP-2-N,3-O-bis[(3R)-3-hydroxytetradecanoyl]-alpha-D-glucosamine + H2O = 2-N,3-O-bis[(3R)-3-hydroxytetradecanoyl]-alpha-D-glucosaminyl 1-phosphate + UMP + 2 H(+). It participates in glycolipid biosynthesis; lipid IV(A) biosynthesis; lipid IV(A) from (3R)-3-hydroxytetradecanoyl-[acyl-carrier-protein] and UDP-N-acetyl-alpha-D-glucosamine: step 4/6. In terms of biological role, hydrolyzes the pyrophosphate bond of UDP-2,3-diacylglucosamine to yield 2,3-diacylglucosamine 1-phosphate (lipid X) and UMP by catalyzing the attack of water at the alpha-P atom. Involved in the biosynthesis of lipid A, a phosphorylated glycolipid that anchors the lipopolysaccharide to the outer membrane of the cell. The polypeptide is UDP-2,3-diacylglucosamine hydrolase (Cellvibrio japonicus (strain Ueda107) (Pseudomonas fluorescens subsp. cellulosa)).